A 169-amino-acid polypeptide reads, in one-letter code: MERAIFAGGCFWCMVQPFEEQDGILSVRSGYTGGHVVNPTYEQVCSKMTGHTEAVEIIFDESKISYADLVEIYWRQTDPTDSFGQFEDRGDNYRPVIFYFDEQQRKIAEQSKANLQASGHFNRPIVTTIEAAQPFYEAEKDHQAFYRKNPERYARSSAIRHHFLKENWS.

Residue Cys-10 is part of the active site.

This sequence belongs to the MsrA Met sulfoxide reductase family.

The enzyme catalyses L-methionyl-[protein] + [thioredoxin]-disulfide + H2O = L-methionyl-(S)-S-oxide-[protein] + [thioredoxin]-dithiol. It catalyses the reaction [thioredoxin]-disulfide + L-methionine + H2O = L-methionine (S)-S-oxide + [thioredoxin]-dithiol. Has an important function as a repair enzyme for proteins that have been inactivated by oxidation. Catalyzes the reversible oxidation-reduction of methionine sulfoxide in proteins to methionine. The polypeptide is Peptide methionine sulfoxide reductase MsrA (Streptococcus mutans serotype c (strain ATCC 700610 / UA159)).